Here is a 596-residue protein sequence, read N- to C-terminus: MILAEMPPLDGGIVIHSGNISQAKQYLGQEHPYAIYDMRAEGDVWLNLDALAIIAGTIQAQGTLYLICPNWDTLEQQLDFDSQRWNGGKVIATPNFYRYFKALVQKFGFQFQTLEETDFSLPKQPPQCQATESLTPQQQKIFEKLPLDSSAIHLITAPRGRGKSTLAGKLAQQLAKTESVLITARSHSVLPSFWKSVAQHIPFFAPDHLLQKIAANQIAAKSWLFIDESASLPLPMLHQFCEYFDKVVLTTTTHNYEGTGRGFSLKFPQQLTKQYREWRLTKPLRWHENDPLEQFIDELLIMSPPSETNQYAEFYHLLAEAHYKTTPSDLRRLFDAQDQLLHSFSEHQRLVGGIWAVPEGDLEPELAEAIWRGERRPQGNLVAQYLCFQGNLLEACQLRSVRISRIAVQPELQKQGIGKRLISDFILQKIQQTRPLVDYVSVSFGLSEPLLHFWQQCGFQLVQITPTKEASSGYHSAMMLYPISAEGQRFVQQATARFERDLALQPFYAELQNMLPIRPLVQLQMDEQDWRNIEGFALAQRSLAASYVSLTRLYRQDPRNHGVLANLWQQFERIQGKKEWLENLRSLLANYLQYTR.

Residues Gln-138, 160–169, and Arg-285 each bind ATP; that span reads GRGKSTLAGK. Residues 328–481 form the N-acetyltransferase domain; that stretch reads SDLRRLFDAQ…SGYHSAMMLY (154 aa). Acetyl-CoA is bound by residues 406–408 and 413–419; these read IAV and QKQGIGK.

This sequence belongs to the RNA cytidine acetyltransferase family. TmcA subfamily.

The protein localises to the cytoplasm. The enzyme catalyses cytidine(34) in elongator tRNA(Met) + acetyl-CoA + ATP + H2O = N(4)-acetylcytidine(34) in elongator tRNA(Met) + ADP + phosphate + CoA + H(+). Its function is as follows. Catalyzes the formation of N(4)-acetylcytidine (ac(4)C) at the wobble position of tRNA(Met), by using acetyl-CoA as an acetyl donor and ATP (or GTP). This chain is tRNA(Met) cytidine acetyltransferase TmcA, found in Actinobacillus pleuropneumoniae serotype 5b (strain L20).